The primary structure comprises 84 residues: Toxin To7 (84 aa).

Residues methionine 1–alanine 20 form the signal peptide. Residues leucine 21–tyrosine 83 enclose the LCN-type CS-alpha/beta domain. Disulfide bonds link cysteine 32–cysteine 82, cysteine 36–cysteine 59, cysteine 42–cysteine 64, and cysteine 46–cysteine 66.

As to expression, expressed by the venom gland.

The protein localises to the secreted. Its function is as follows. Inhibits voltage-gated sodium channels (Nav). The protein is Toxin To7 of Tityus obscurus (Amazonian scorpion).